The primary structure comprises 316 residues: Acetyl-coenzyme A carboxylase carboxyl transferase subunit alpha (316 aa).

The CoA carboxyltransferase C-terminal domain maps to 39–293 (RLQDKSKALT…RGELLAQLKM (255 aa)).

It belongs to the AccA family. As to quaternary structure, acetyl-CoA carboxylase is a heterohexamer composed of biotin carboxyl carrier protein (AccB), biotin carboxylase (AccC) and two subunits each of ACCase subunit alpha (AccA) and ACCase subunit beta (AccD).

The protein localises to the cytoplasm. The enzyme catalyses N(6)-carboxybiotinyl-L-lysyl-[protein] + acetyl-CoA = N(6)-biotinyl-L-lysyl-[protein] + malonyl-CoA. Its pathway is lipid metabolism; malonyl-CoA biosynthesis; malonyl-CoA from acetyl-CoA: step 1/1. Functionally, component of the acetyl coenzyme A carboxylase (ACC) complex. First, biotin carboxylase catalyzes the carboxylation of biotin on its carrier protein (BCCP) and then the CO(2) group is transferred by the carboxyltransferase to acetyl-CoA to form malonyl-CoA. The sequence is that of Acetyl-coenzyme A carboxylase carboxyl transferase subunit alpha from Pseudomonas aeruginosa (strain UCBPP-PA14).